A 456-amino-acid polypeptide reads, in one-letter code: E3 ubiquitin-protein ligase PUB24 (456 aa).

In terms of domain architecture, U-box spans 9-83; the sequence is EIPNYFICPI…QHWCVENETR (75 aa).

Post-translationally, auto-ubiquitinated.

The catalysed reaction is S-ubiquitinyl-[E2 ubiquitin-conjugating enzyme]-L-cysteine + [acceptor protein]-L-lysine = [E2 ubiquitin-conjugating enzyme]-L-cysteine + N(6)-ubiquitinyl-[acceptor protein]-L-lysine.. The protein operates within protein modification; protein ubiquitination. Functionally, E3 ubiquitin-protein ligase that acts as a negative regulator of the immunity triggered by the pathogen-associated molecular patterns (PAMPs), in association with PUB22 and PUB23. The polypeptide is E3 ubiquitin-protein ligase PUB24 (PUB24) (Arabidopsis thaliana (Mouse-ear cress)).